The primary structure comprises 151 residues: Small heat shock protein HspD (151 aa).

In terms of domain architecture, sHSP spans 28–138; sequence RATEDNYPPY…KPRRIAINGA (111 aa).

This sequence belongs to the small heat shock protein (HSP20) family.

The sequence is that of Small heat shock protein HspD (hspD) from Bradyrhizobium diazoefficiens (strain JCM 10833 / BCRC 13528 / IAM 13628 / NBRC 14792 / USDA 110).